Consider the following 354-residue polypeptide: Rhodopsin (354 aa).

Residues 1–36 (MNGTEGPYFYIPMVNTTGIVRSPYEYPQYYLVNPAA) are Extracellular-facing. N-linked (GlcNAc...) asparagine glycans are attached at residues Asn-2 and Asn-15. Residues 37–61 (YAALGAYMFFLILLGFPINFLTLYV) form a helical membrane-spanning segment. Residues 62–73 (TLEHKKLRTPLN) lie on the Cytoplasmic side of the membrane. Residues 74–96 (YILLNLAVADLFMVFGGFTTTMY) form a helical membrane-spanning segment. Topologically, residues 97 to 110 (TSMHGYFVLGRLGC) are extracellular. Cys-110 and Cys-187 are joined by a disulfide. The helical transmembrane segment at 111–133 (NLEGFFATLGGEIGLWSLVVLAI) threads the bilayer. The 'Ionic lock' involved in activated form stabilization signature appears at 134-136 (ERW). Topologically, residues 134 to 152 (ERWVVVCKPISNFRFGENH) are cytoplasmic. A helical membrane pass occupies residues 153 to 173 (AIMGLAFTWIMACACAVPPLV). At 174–202 (GWSRYIPEGMQCSCGVDYYTRAEGFNNES) the chain is on the extracellular side. Residue Asn-200 is glycosylated (N-linked (GlcNAc...) asparagine). Residues 203–224 (FVVYMFTCHFCIPLTIIGFCYG) traverse the membrane as a helical segment. Topologically, residues 225–252 (RLLCAVKEAAAAQQESETTQRAEREVTR) are cytoplasmic. The helical transmembrane segment at 253–274 (MVILMVVGFLVCWLPYASVAWY) threads the bilayer. The Extracellular portion of the chain corresponds to 275–286 (IFSNQGSQFGPL). Residues 287 to 308 (FMTIPAFFAKSSSVYNPMIYIC) form a helical membrane-spanning segment. Residue Lys-296 is modified to N6-(retinylidene)lysine. Residues 309 to 354 (MNKQFRHCMITTLCCGKNPFEEEEGASTTASKTEASSVSSSSVSPA) lie on the Cytoplasmic side of the membrane. S-palmitoyl cysteine attachment occurs at residues Cys-322 and Cys-323. The tract at residues 333 to 354 (GASTTASKTEASSVSSSSVSPA) is disordered. Residues 334–354 (ASTTASKTEASSVSSSSVSPA) show a composition bias toward low complexity.

It belongs to the G-protein coupled receptor 1 family. Opsin subfamily. Post-translationally, phosphorylated on some or all of the serine and threonine residues present in the C-terminal region. Contains one covalently linked retinal chromophore.

The protein resides in the membrane. It localises to the cell projection. Its subcellular location is the cilium. It is found in the photoreceptor outer segment. Its function is as follows. Photoreceptor required for image-forming vision at low light intensity. While most salt water fish species use retinal as chromophore, most freshwater fish use 3-dehydroretinal, or a mixture of retinal and 3-dehydroretinal. Light-induced isomerization of 11-cis to all-trans retinal triggers a conformational change that activates signaling via G-proteins. Subsequent receptor phosphorylation mediates displacement of the bound G-protein alpha subunit by arrestin and terminates signaling. The sequence is that of Rhodopsin (rho) from Salaria pavo (Peacock blenny).